We begin with the raw amino-acid sequence, 138 residues long: MRIMGLDVGSKTVGVAISDPLGWTAQGVETIQIDESRKQFGYDRVKELVLEYEVEKVVVGLPKNMNNTIGPRAESSKIYAEVLESRIGLPVVLWDERLTTSAAERTLIEADVSRKKRKEVIDKLAAVMILQSYLDTTN.

The protein belongs to the YqgF nuclease family.

Its subcellular location is the cytoplasm. In terms of biological role, could be a nuclease involved in processing of the 5'-end of pre-16S rRNA. The chain is Putative pre-16S rRNA nuclease from Listeria innocua serovar 6a (strain ATCC BAA-680 / CLIP 11262).